The following is a 331-amino-acid chain: Bifunctional nuclease 1 (331 aa).

Positions 126-261 constitute a BFN domain; that stretch reads CVQNNPRVLR…RIAYNNGLKV (136 aa). Residues 291–326 enclose the UVR domain; that stretch reads EAQEFDLVRNMLVAAVEERYKDAAQYRDQLFMFRAK.

It belongs to the bifunctional nuclease family.

The protein resides in the nucleus. Its function is as follows. Bifunctional nuclease with both RNase and DNase activities. Involved in basal defense response. Participates in abscisic acid-derived callose deposition following infection by a necrotrophic pathogen. In Oryza sativa subsp. japonica (Rice), this protein is Bifunctional nuclease 1 (BBD1).